The following is a 361-amino-acid chain: Blue-sensitive opsin (361 aa).

At 1–43 (MHPPRPTTDLPEDFYIPMALDAPNITALSPFLVPQTHLGSPGL) the chain is on the extracellular side. Residue asparagine 24 is glycosylated (N-linked (GlcNAc...) asparagine). The chain crosses the membrane as a helical span at residues 44 to 68 (FRAMAAFMFLLIALGVPINTLTIFC). Residues 69 to 80 (TARFRKLRSHLN) are Cytoplasmic-facing. A helical transmembrane segment spans residues 81 to 106 (YILVNLALANLLVILVGSTTACYSFS). Over 107-120 (QMYFALGPTACKIE) the chain is Extracellular. Cysteine 117 and cysteine 194 are oxidised to a cystine. A helical transmembrane segment spans residues 121–140 (GFAATLGGMVSLWSLAVVAF). The Cytoplasmic segment spans residues 141 to 159 (ERFLVICKPLGNFTFRGSH). Residues 160 to 183 (AVLGCVATWVLGFVASAPPLFGWS) form a helical membrane-spanning segment. Topologically, residues 184-209 (RYIPEGLQCSCGPDWYTTDNKWHNES) are extracellular. Residues 210 to 237 (YVLFLFTFCFGVPLAIIVFSYGRLLITL) form a helical membrane-spanning segment. The Cytoplasmic segment spans residues 238–259 (RAVARQQEQSATTQKADREVTK). The helical transmembrane segment at 260-283 (MVVVMVLGFLVCWAPYTAFALWVV) threads the bilayer. Over 284–291 (THRGRSFE) the chain is Extracellular. A helical membrane pass occupies residues 292-316 (VGLASIPSVFSKSSTVYNPVIYVLM). Position 303 is an N6-(retinylidene)lysine (lysine 303). The Cytoplasmic portion of the chain corresponds to 317 to 361 (NKQFRSCMLKLLFCGRSPFGDDEDVSGSSQATQVSSVSSSHVAPA). The segment at 338-361 (DEDVSGSSQATQVSSVSSSHVAPA) is disordered. The segment covering 342–361 (SGSSQATQVSSVSSSHVAPA) has biased composition (low complexity).

The protein belongs to the G-protein coupled receptor 1 family. Opsin subfamily. Phosphorylated on some or all of the serine and threonine residues present in the C-terminal region. In terms of tissue distribution, the color pigments are found in the cone photoreceptor cells.

The protein localises to the membrane. Its function is as follows. Visual pigments are the light-absorbing molecules that mediate vision. They consist of an apoprotein, opsin, covalently linked to cis-retinal. This Gallus gallus (Chicken) protein is Blue-sensitive opsin.